The primary structure comprises 87 residues: Large ribosomal subunit protein bL27 (87 aa).

The interval 1–21 is disordered; the sequence is MAHKKGGGSTRNGRDSASKRL.

This sequence belongs to the bacterial ribosomal protein bL27 family.

This Amoebophilus asiaticus (strain 5a2) protein is Large ribosomal subunit protein bL27.